We begin with the raw amino-acid sequence, 156 residues long: Small ribosomal subunit protein uS7 (156 aa).

It belongs to the universal ribosomal protein uS7 family. In terms of assembly, part of the 30S ribosomal subunit. Contacts proteins S9 and S11.

Its function is as follows. One of the primary rRNA binding proteins, it binds directly to 16S rRNA where it nucleates assembly of the head domain of the 30S subunit. Is located at the subunit interface close to the decoding center, probably blocks exit of the E-site tRNA. The chain is Small ribosomal subunit protein uS7 from Chlorobaculum tepidum (strain ATCC 49652 / DSM 12025 / NBRC 103806 / TLS) (Chlorobium tepidum).